A 210-amino-acid chain; its full sequence is Large ribosomal subunit protein uL3 (210 aa).

The disordered stretch occupies residues 125–151 (RHGQSRGPMSHGSRYHRRPGSMGPVAP).

It belongs to the universal ribosomal protein uL3 family. As to quaternary structure, part of the 50S ribosomal subunit. Forms a cluster with proteins L14 and L19.

Functionally, one of the primary rRNA binding proteins, it binds directly near the 3'-end of the 23S rRNA, where it nucleates assembly of the 50S subunit. This chain is Large ribosomal subunit protein uL3, found in Bacillus cereus (strain Q1).